The primary structure comprises 163 residues: Nucleotide-binding protein Spro_1084 (163 aa).

It belongs to the YajQ family.

In terms of biological role, nucleotide-binding protein. This Serratia proteamaculans (strain 568) protein is Nucleotide-binding protein Spro_1084.